The following is a 142-amino-acid chain: Endoribonuclease YbeY (142 aa).

Residues histidine 107, histidine 111, and aspartate 117 each contribute to the Zn(2+) site.

This sequence belongs to the endoribonuclease YbeY family. Requires Zn(2+) as cofactor.

The protein resides in the cytoplasm. Functionally, single strand-specific metallo-endoribonuclease involved in late-stage 70S ribosome quality control and in maturation of the 3' terminus of the 16S rRNA. The polypeptide is Endoribonuclease YbeY (Chlorobium phaeobacteroides (strain DSM 266 / SMG 266 / 2430)).